The following is a 527-amino-acid chain: UPF0053 protein YegH (527 aa).

Transmembrane regions (helical) follow at residues 14 to 34 (ITLIVIELVLGIDNLVFIAIL), 51 to 71 (LLLAMLMRLLLLASISWLVTL), 81 to 101 (FTFSARDLIMLFGGFFLLFKA), 122 to 142 (GAKFWGVVTQIVVLDAIFSLD), 145 to 165 (ITAVGMVDHLLVMMAAVVIAI), 185 to 205 (IVILCLSFLLMIGFSLVAEGF), and 207 to 227 (FVIPKGYLYAAIGFSVMIEAL). CBS domains are found at residues 306–366 (MTSR…GEPL) and 371–429 (LIRQ…PNEV).

Belongs to the UPF0053 family.

Its subcellular location is the cell membrane. This Shigella flexneri protein is UPF0053 protein YegH (yegH).